The following is a 258-amino-acid chain: MKKTIVFKCGGSVIRELSEEFYQNLKELRASGWKLAIVHGGGPEITNMLKRLNIKTEFSGGQRKTTKPVLEVAEMVLSGSVNKFFVAELAKHGLRAAGISGKDGGLLEADYLDPETYGEVGEIKKVDASMVNALMENGIIPVIAPLSMTSDCKTLNVNADLAASAVAGALEADKLMFVTDVDGIMKEKQRLDVLTPKEIQMLIKQEVITGGMIPKVNSALSALSDQVSEVMIVNGKGSFFAEQTFQGTKIVKAKEAVS.

Substrate contacts are provided by residues 41–42, arginine 63, and asparagine 156; that span reads GG.

This sequence belongs to the acetylglutamate kinase family. ArgB subfamily.

The protein resides in the cytoplasm. It catalyses the reaction N-acetyl-L-glutamate + ATP = N-acetyl-L-glutamyl 5-phosphate + ADP. It functions in the pathway amino-acid biosynthesis; L-arginine biosynthesis; N(2)-acetyl-L-ornithine from L-glutamate: step 2/4. In terms of biological role, catalyzes the ATP-dependent phosphorylation of N-acetyl-L-glutamate. This is Acetylglutamate kinase from Bacillus amyloliquefaciens (Bacillus velezensis).